A 126-amino-acid chain; its full sequence is Ejaculatory bulb-specific protein 3 (126 aa).

Residues 1-17 (MKMILALVVLGLVLVAA) form the signal peptide.

Belongs to the insect A10/OS-D protein family. As to expression, specifically expressed in the ejaculatory bulb and seminal fluid.

It localises to the secreted. In terms of biological role, protein component of the posterior mating plug. The sequence is that of Ejaculatory bulb-specific protein 3 from Drosophila melanogaster (Fruit fly).